A 328-amino-acid chain; its full sequence is tRNA dimethylallyltransferase (328 aa).

Residue 25–32 coordinates ATP; the sequence is GNTGSGKS. A substrate-binding site is contributed by 27-32; sequence TGSGKS. Residues 50–53 are interaction with substrate tRNA; it reads DSRQ.

Belongs to the IPP transferase family. Monomer. Mg(2+) serves as cofactor.

The catalysed reaction is adenosine(37) in tRNA + dimethylallyl diphosphate = N(6)-dimethylallyladenosine(37) in tRNA + diphosphate. Its function is as follows. Catalyzes the transfer of a dimethylallyl group onto the adenine at position 37 in tRNAs that read codons beginning with uridine, leading to the formation of N6-(dimethylallyl)adenosine (i(6)A). The polypeptide is tRNA dimethylallyltransferase (Dehalococcoides mccartyi (strain ATCC BAA-2100 / JCM 16839 / KCTC 5957 / BAV1)).